We begin with the raw amino-acid sequence, 63 residues long: MARRCEICDKGVVAGVSYSHSHRQSKRTWAPNIKKVKALVNGTPKTVHVCTRCLRSGKVQRAI.

This sequence belongs to the bacterial ribosomal protein bL28 family.

The chain is Large ribosomal subunit protein bL28 from Clostridium beijerinckii (strain ATCC 51743 / NCIMB 8052) (Clostridium acetobutylicum).